The primary structure comprises 99 residues: MVCVPCIIIPLLLYIWHKFVQPILLRYWNPWEKKDDDGNVIKKGPDFPFECKGGVCPFVPGGKKTENVSDDDAEESENPPLNATAMAAETEVDESKKEI.

Positions 60-99 are disordered; that stretch reads PGGKKTENVSDDDAEESENPPLNATAMAAETEVDESKKEI. The span at 68–77 shows a compositional bias: acidic residues; the sequence is VSDDDAEESE. Serine 69 is modified (phosphoserine).

The protein belongs to the UPF0729 family.

This Drosophila melanogaster (Fruit fly) protein is UPF0729 protein CG18508.